A 239-amino-acid chain; its full sequence is Fatty acid metabolism regulator protein (239 aa).

The 69-residue stretch at Gln6–Phe74 folds into the HTH gntR-type domain. A DNA-binding region (H-T-H motif) is located at residues Glu34 to Gln53.

Homodimer.

The protein localises to the cytoplasm. Its function is as follows. Multifunctional regulator of fatty acid metabolism. The sequence is that of Fatty acid metabolism regulator protein from Serratia proteamaculans (strain 568).